The chain runs to 343 residues: Probable dual-specificity RNA methyltransferase RlmN (343 aa).

Glu91 serves as the catalytic Proton acceptor. The 230-residue stretch at 97-326 (HPDRITACIS…AEIRREKGSD (230 aa)) folds into the Radical SAM core domain. A disulfide bridge links Cys104 with Cys331. Residues Cys111, Cys115, and Cys118 each contribute to the [4Fe-4S] cluster site. S-adenosyl-L-methionine contacts are provided by residues 158 to 159 (GE), Ser190, 213 to 215 (SLH), and Asn289. Catalysis depends on Cys331, which acts as the S-methylcysteine intermediate.

The protein belongs to the radical SAM superfamily. RlmN family. [4Fe-4S] cluster is required as a cofactor.

It localises to the cytoplasm. It carries out the reaction adenosine(2503) in 23S rRNA + 2 reduced [2Fe-2S]-[ferredoxin] + 2 S-adenosyl-L-methionine = 2-methyladenosine(2503) in 23S rRNA + 5'-deoxyadenosine + L-methionine + 2 oxidized [2Fe-2S]-[ferredoxin] + S-adenosyl-L-homocysteine. The catalysed reaction is adenosine(37) in tRNA + 2 reduced [2Fe-2S]-[ferredoxin] + 2 S-adenosyl-L-methionine = 2-methyladenosine(37) in tRNA + 5'-deoxyadenosine + L-methionine + 2 oxidized [2Fe-2S]-[ferredoxin] + S-adenosyl-L-homocysteine. Functionally, specifically methylates position 2 of adenine 2503 in 23S rRNA and position 2 of adenine 37 in tRNAs. The chain is Probable dual-specificity RNA methyltransferase RlmN from Thermotoga sp. (strain RQ2).